We begin with the raw amino-acid sequence, 56 residues long: MAVPQRRTSKTRKRMRRTHFKLEIPGMIKCDNCSEYKLAHRVCPSCGHYKGVKVAK.

This sequence belongs to the bacterial ribosomal protein bL32 family.

In Brevibacillus brevis (strain 47 / JCM 6285 / NBRC 100599), this protein is Large ribosomal subunit protein bL32.